The chain runs to 1886 residues: Nuclear pore membrane glycoprotein 210 (1886 aa).

Residues 1–25 (MARASLIQPGLWALLLLQAVGPAVA) form the signal peptide. At 26 to 1805 (AKLNIPKVLL…GASLLSHFLD (1780 aa)) the chain is on the perinuclear space side. N-linked (GlcNAc...) asparagine glycans are attached at residues Asn337, Asn484, Asn681, and Asn1039. Positions 1078-1151 (FPPFRLIPRK…VQAVDAETGK (74 aa)) constitute a BIG2 domain. The chain crosses the membrane as a helical span at residues 1806–1828 (SYQVMFFTFFALLAGTAVTIIAY). The Cytoplasmic segment spans residues 1829-1886 (HTVCAPRELASPLALTPHASPQHSPHYLASSPTAFNTLPSDRKASPPSGLWSPAYASH). The residue at position 1839 (Ser1839) is a Phosphoserine. Thr1844 is modified (phosphothreonine). Residues 1866–1886 (LPSDRKASPPSGLWSPAYASH) form a disordered region. Phosphoserine occurs at positions 1873, 1876, 1880, and 1885.

Belongs to the NUP210 family. Forms dimers and possibly higher-order oligomers. Post-translationally, N-glycosylated, but not all potential glycosylation sites may be used. Contains high-mannose type oligosaccharides. Phosphorylated at Ser-1880 in mitosis specifically; not phosphorylated in interphase.

It is found in the nucleus. Its subcellular location is the nuclear pore complex. It localises to the nucleus membrane. The protein localises to the endoplasmic reticulum membrane. Functionally, nucleoporin essential for nuclear pore assembly and fusion, nuclear pore spacing, as well as structural integrity. In Rattus norvegicus (Rat), this protein is Nuclear pore membrane glycoprotein 210 (Nup210).